The sequence spans 433 residues: Signal recognition particle 54 kDa protein (433 aa).

Residues 106–113 (GVEGSGKT), 186–190 (DTAGR), and 244–247 (TKMD) contribute to the GTP site.

The protein belongs to the GTP-binding SRP family. SRP54 subfamily. Part of the signal recognition particle protein translocation system, which is composed of SRP and FtsY. Archaeal SRP consists of a 7S RNA molecule of 300 nucleotides and two protein subunits: SRP54 and SRP19.

It localises to the cytoplasm. It carries out the reaction GTP + H2O = GDP + phosphate + H(+). Functionally, involved in targeting and insertion of nascent membrane proteins into the cytoplasmic membrane. Binds to the hydrophobic signal sequence of the ribosome-nascent chain (RNC) as it emerges from the ribosomes. The SRP-RNC complex is then targeted to the cytoplasmic membrane where it interacts with the SRP receptor FtsY. This Pyrobaculum islandicum (strain DSM 4184 / JCM 9189 / GEO3) protein is Signal recognition particle 54 kDa protein.